A 221-amino-acid chain; its full sequence is Very-long-chain (3R)-3-hydroxyacyl-CoA dehydratase PASTICCINO 2B (221 aa).

Residues 1–11 are Cytoplasmic-facing; sequence MTGVGSAVRRL. Residues 12–32 form a helical membrane-spanning segment; the sequence is YLSVYNWAVFFGWAQVLYYAV. Topologically, residues 33 to 51 are lumenal; the sequence is TTLLESGHEAVYAAVERPL. A helical transmembrane segment spans residues 52 to 70; the sequence is QFAQTAAFLEILHGLVGLV. Residues 71 to 76 lie on the Cytoplasmic side of the membrane; it reads RSPVSA. Residues 77–95 traverse the membrane as a helical segment; sequence TLPQIGSRLFLTWGILWSF. The Lumenal segment spans residues 96 to 100; the sequence is PETHS. The chain crosses the membrane as a helical span at residues 101–121; that stretch reads HILVTSLVISWSITEIIRYSF. Topologically, residues 122 to 141 are cytoplasmic; that stretch reads FGMKETFGFAPSWLLWLRYS. A helical transmembrane segment spans residues 142–165; that stretch reads TFMVLYPTGISSEVGLIYIALPYM. Catalysis depends on residues tyrosine 147 and glutamate 154. Residues 166-184 are Lumenal-facing; it reads KATEKYCLRMPNKWNFSFD. A helical membrane pass occupies residues 185–209; the sequence is FSYASILSLAVYVPGSPHMFTYMLA. Over 210-221 the chain is Cytoplasmic; the sequence is QRKKALAKAKAA.

Belongs to the very long-chain fatty acids dehydratase HACD family.

It localises to the endoplasmic reticulum membrane. It catalyses the reaction a very-long-chain (3R)-3-hydroxyacyl-CoA = a very-long-chain (2E)-enoyl-CoA + H2O. It functions in the pathway lipid metabolism; fatty acid biosynthesis. In terms of biological role, catalyzes the third of the four reactions of the long-chain fatty acids elongation cycle. This endoplasmic reticulum-bound enzymatic process, allows the addition of two carbons to the chain of long- and very long-chain fatty acids/VLCFAs per cycle. This enzyme catalyzes the dehydration of the 3-hydroxyacyl-CoA intermediate into trans-2,3-enoyl-CoA, within each cycle of fatty acid elongation. Thereby, it participates in the production of VLCFAs of different chain lengths that are involved in multiple biological processes as precursors of membrane lipids and lipid mediators. May be an anti-phosphatase that prevents CDKA-1 dephosphorylation and activation. Involved in the hormonal control of cell division and differentiation. Required for proliferation control of meristematic and non-meristematic cells. Negative regulator of the cell cycle. The polypeptide is Very-long-chain (3R)-3-hydroxyacyl-CoA dehydratase PASTICCINO 2B (PAS2B) (Oryza sativa subsp. japonica (Rice)).